Here is a 129-residue protein sequence, read N- to C-terminus: Dynein 14 kDa light chain, flagellar outer arm (129 aa).

The Thioredoxin domain occupies 2-109; the sequence is AFITEIANEA…LNRIVTELSG (108 aa). Residues Cys-34 and Cys-37 are joined by a disulfide bond. Positions 107-129 are disordered; it reads LSGKNPPPAAPAAAPAAPAAEAS. Low complexity predominate over residues 117-129; the sequence is PAAAPAAPAAEAS.

In terms of assembly, consists of at least 3 heavy chains (alpha, beta and gamma), 2 intermediate chains and 8 light chains.

Its subcellular location is the cell projection. It is found in the cilium. The protein resides in the flagellum. The protein localises to the cytoplasm. It localises to the cytoskeleton. Its subcellular location is the flagellum axoneme. Its function is as follows. May be involved in regulating the redox state of functionally important thiol groups within dynein. This chain is Dynein 14 kDa light chain, flagellar outer arm, found in Chlamydomonas reinhardtii (Chlamydomonas smithii).